A 757-amino-acid chain; its full sequence is Alcohol dehydrogenase (quinone), dehydrogenase subunit (757 aa).

Residues 1 to 34 form the signal peptide; that stretch reads MTSGLLTPIKVTKKRLLSCAAALAFSAAVPVAFA. Gln-35 carries the post-translational modification Pyrrolidone carboxylic acid. Glu-95 contacts pyrroloquinoline quinone. Cys-141 and Cys-142 are oxidised to a cystine. A pyrroloquinoline quinone-binding site is contributed by Arg-147. Glu-215 lines the Ca(2+) pocket. Thr-277 provides a ligand contact to pyrroloquinoline quinone. Residues Asn-297 and Asp-342 each coordinate Ca(2+). Asp-342 (proton acceptor) is an active-site residue. Residues Lys-369 and Ile-588 each contribute to the pyrroloquinoline quinone site. The region spanning 640–719 is the Cytochrome c domain; the sequence is ARQKDGYFMY…DIRNFIVKRA (80 aa). Residues Cys-653, Cys-656, His-657, and Met-696 each contribute to the heme c site. Residues 726–757 are disordered; the sequence is EVKARENSTGVPNDQFLNVPQSTADVPTADHP. Over residues 732–750 the composition is skewed to polar residues; sequence NSTGVPNDQFLNVPQSTAD.

The protein belongs to the bacterial PQQ dehydrogenase family. The alcohol dehydrogenase multicomponent enzyme system is composed of a dehydrogenase subunit I (AdhA), a cytochrome c subunit II (AdhB) and a subunit III (AdhS). It depends on pyrroloquinoline quinone as a cofactor. The cofactor is Ca(2+). Requires heme c as cofactor.

Its subcellular location is the cell membrane. It catalyses the reaction ethanol + a ubiquinone = a ubiquinol + acetaldehyde. Its activity is regulated as follows. 2,6-dichloro-4-dicyanovinylphenol (PC16) and antimycin A inhibit ubiquinol oxidation activity more selectively than the ubiquinone reductase activity. In terms of biological role, dehydrogenase component of the alcohol dehydrogenase multicomponent enzyme system which is involved in the production of acetic acid and in the ethanol oxidase respiratory chain. Quinohemoprotein alcohol dehydrogenase (ADH) catalyzes the oxidation of ethanol to acetaldehyde by transferring electrons to the ubiquinone embedded in the membrane phospholipids. The electrons transfer from ethanol to membranous ubiquinone occurs from pyrroloquinoline quinone (PQQ) to one heme c in subunit I (AdhA), and finally to two heme c in subunit II (AdhB). Besides ubiquinone reduction, ADH also has a ubiquinol (QH2) oxidation reaction which mediates electron transfer from ubiquinol to the non-energy generating bypass oxidase system. The electrons transfer occurs from ubiquinol (QH2) to the additional heme c within subunit II (AdhB). Also able to use quinone analogs such as 2,3-dimethoxy-5-methyl-6-n-decyl-1,4-benzoquinone (DB) and 2,3-dimethoxy-5-methyl-6-n-pentyl-1,4-benzoquinone (PB). This is Alcohol dehydrogenase (quinone), dehydrogenase subunit from Gluconobacter oxydans (strain 621H) (Gluconobacter suboxydans).